A 363-amino-acid polypeptide reads, in one-letter code: Phospho-N-acetylmuramoyl-pentapeptide-transferase (363 aa).

A run of 10 helical transmembrane segments spans residues 3-23 (TVLI…PLYI), 55-75 (VVII…TGAL), 76-96 (PTVS…VGFL), 116-136 (LAGQ…FPAA), 158-178 (LAVF…LIIT), 190-210 (GLDG…VLIC), 237-257 (LAVV…WNAS), 261-281 (IFMG…LAIL), 286-306 (ILLV…ILQV), and 340-360 (FWII…AEWV).

This sequence belongs to the glycosyltransferase 4 family. MraY subfamily. Mg(2+) serves as cofactor.

The protein resides in the cell membrane. It carries out the reaction UDP-N-acetyl-alpha-D-muramoyl-L-alanyl-gamma-D-glutamyl-meso-2,6-diaminopimeloyl-D-alanyl-D-alanine + di-trans,octa-cis-undecaprenyl phosphate = di-trans,octa-cis-undecaprenyl diphospho-N-acetyl-alpha-D-muramoyl-L-alanyl-D-glutamyl-meso-2,6-diaminopimeloyl-D-alanyl-D-alanine + UMP. It participates in cell wall biogenesis; peptidoglycan biosynthesis. Its function is as follows. Catalyzes the initial step of the lipid cycle reactions in the biosynthesis of the cell wall peptidoglycan: transfers peptidoglycan precursor phospho-MurNAc-pentapeptide from UDP-MurNAc-pentapeptide onto the lipid carrier undecaprenyl phosphate, yielding undecaprenyl-pyrophosphoryl-MurNAc-pentapeptide, known as lipid I. This chain is Phospho-N-acetylmuramoyl-pentapeptide-transferase, found in Kineococcus radiotolerans (strain ATCC BAA-149 / DSM 14245 / SRS30216).